A 211-amino-acid polypeptide reads, in one-letter code: ATP-dependent dethiobiotin synthetase BioD (211 aa).

Gly10–Tyr15 provides a ligand contact to ATP. Position 14 (Thr14) interacts with Mg(2+). The active site involves Lys35. Substrate is bound at residue Ser39. ATP-binding positions include Asp44, Glu105–Gly108, and Asn165–Cys166. Mg(2+) contacts are provided by Asp44 and Glu105.

This sequence belongs to the dethiobiotin synthetase family. In terms of assembly, homodimer. Requires Mg(2+) as cofactor.

It is found in the cytoplasm. The enzyme catalyses (7R,8S)-7,8-diammoniononanoate + CO2 + ATP = (4R,5S)-dethiobiotin + ADP + phosphate + 3 H(+). It functions in the pathway cofactor biosynthesis; biotin biosynthesis; biotin from 7,8-diaminononanoate: step 1/2. Catalyzes a mechanistically unusual reaction, the ATP-dependent insertion of CO2 between the N7 and N8 nitrogen atoms of 7,8-diaminopelargonic acid (DAPA, also called 7,8-diammoniononanoate) to form a ureido ring. This chain is ATP-dependent dethiobiotin synthetase BioD, found in Methanococcus vannielii (strain ATCC 35089 / DSM 1224 / JCM 13029 / OCM 148 / SB).